The following is a 380-amino-acid chain: cAMP-dependent protein kinase type I-alpha regulatory subunit (380 aa).

N-acetylmethionine is present on Met1. Ala2 carries the post-translational modification N-acetylalanine; in cAMP-dependent protein kinase type I-alpha regulatory subunit, N-terminally processed. Residues Ala2 to Val135 form a dimerization and phosphorylation region. A phosphoserine mark is found at Ser3, Ser76, and Ser82. The interval Ile64–Arg96 is disordered. The Pseudophosphorylation motif motif lies at Arg95 to Ile99. Residue Ser100 is modified to Phosphoserine. Residues Leu136–Ser253, Glu201, Arg210, Ile254–Val380, Glu325, and Arg334 contribute to the 3',5'-cyclic AMP site. Position 257 is a phosphoserine (Ser257).

The protein belongs to the cAMP-dependent kinase regulatory chain family. In terms of assembly, the inactive holoenzyme is composed of two regulatory chains and two catalytic chains. Activation by cAMP releases the two active catalytic monomers and the regulatory dimer. Interacts with PRKACA and PRKACB. PRKAR1A also interacts with RFC2; the complex may be involved in cell survival. Interacts with AKAP4. Interacts with RARA; the interaction occurs in the presence of cAMP or FSH and regulates RARA transcriptional activity. Interacts with the phosphorylated form of PJA2. Interacts with CBFA2T3. Interacts with PRKX; regulates this cAMP-dependent protein kinase. Interacts with smAKAP; this interaction may target PRKAR1A to the plasma membrane. Interacts with AICDA. The pseudophosphorylation site binds to the substrate-binding region of the catalytic chain, resulting in the inhibition of its activity. Four types of regulatory chains are found: I-alpha, I-beta, II-alpha, and II-beta. Their expression varies among tissues and is in some cases constitutive and in others inducible.

It localises to the cell membrane. Regulatory subunit of the cAMP-dependent protein kinases involved in cAMP signaling in cells. The protein is cAMP-dependent protein kinase type I-alpha regulatory subunit (PRKAR1A) of Sus scrofa (Pig).